A 312-amino-acid chain; its full sequence is Serine/threonine-protein phosphatase PP2A catalytic subunit (312 aa).

Positions 60, 62, 88, and 120 each coordinate Mn(2+). H121 (proton donor) is an active-site residue. Positions 170 and 244 each coordinate Mn(2+).

It belongs to the PPP phosphatase family. PP-2A subfamily. It depends on Mn(2+) as a cofactor.

It is found in the cytoplasm. The catalysed reaction is O-phospho-L-seryl-[protein] + H2O = L-seryl-[protein] + phosphate. The enzyme catalyses O-phospho-L-threonyl-[protein] + H2O = L-threonyl-[protein] + phosphate. This chain is Serine/threonine-protein phosphatase PP2A catalytic subunit, found in Nicotiana tabacum (Common tobacco).